A 113-amino-acid polypeptide reads, in one-letter code: Mitochondrial import inner membrane translocase subunit tim16 (113 aa).

Residues 56–108 (KILGLENVETVSKEDIDKKYNELLTINDPKDGGSEYLQIKISGAKHCLHSALK) form a J-like region.

Belongs to the TIM16/PAM16 family. In terms of assembly, probable component of the PAM complex at least composed of a mitochondrial HSP70 protein, grepE, tim16 and tim14. Associates with the TIM23 complex.

It localises to the mitochondrion inner membrane. Functionally, regulates ATP-dependent protein translocation into the mitochondrial matrix. The protein is Mitochondrial import inner membrane translocase subunit tim16 (timm16) of Dictyostelium discoideum (Social amoeba).